The chain runs to 184 residues: Uroplakin-2 (184 aa).

A signal peptide spans 1–25; that stretch reads MASTLPVQTLPLILILLAVLAPGTA. Residues 26–84 constitute a propeptide that is removed on maturation; it reads DFNISSLSGLLSPALTESLLIALPPCHLTGGNATLMVRRANDSKVVKSDFVVPPCRGRR. Residues Asn-28, Asn-57, and Asn-66 are each glycosylated (N-linked (GlcNAc...) asparagine). Over 85–155 the chain is Lumenal; the sequence is ELVSVVDSGS…IGLGMARTGG (71 aa). A helical membrane pass occupies residues 156-180; it reads MVVITVLLSVAMFLLVVGLIVALHW. Residues 181–184 lie on the Cytoplasmic side of the membrane; sequence DARK.

This sequence belongs to the uroplakin-2 family. In terms of assembly, interacts with uroplakin-1a (UPK1A).

Its subcellular location is the cell membrane. In terms of biological role, component of the asymmetric unit membrane (AUM); a highly specialized biomembrane elaborated by terminally differentiated urothelial cells. May play an important role in regulating the assembly of the AUM. This Mus musculus (Mouse) protein is Uroplakin-2 (Upk2).